The sequence spans 146 residues: Large ribosomal subunit protein uL15 (146 aa).

The disordered stretch occupies residues 1-54; the sequence is MKLHELQPAAGSRKAPKRVGRGTGSGLGRNAGKGEKGQNARSGGGVRPGFEGGQ. Composition is skewed to gly residues over residues 21–31 and 42–52; these read RGTGSGLGRNA and SGGGVRPGFEG.

It belongs to the universal ribosomal protein uL15 family. Part of the 50S ribosomal subunit.

In terms of biological role, binds to the 23S rRNA. The polypeptide is Large ribosomal subunit protein uL15 (Clostridium botulinum (strain Eklund 17B / Type B)).